The sequence spans 250 residues: Probable S-methyl-5'-thioinosine phosphorylase (250 aa).

Phosphate is bound by residues Thr14 and 56–57; that span reads RH. Met189 is a substrate binding site. Phosphate is bound at residue Thr190. 213-215 lines the substrate pocket; the sequence is NWA.

This sequence belongs to the PNP/MTAP phosphorylase family. MTAP subfamily. In terms of assembly, homotrimer.

The enzyme catalyses S-methyl-5'-thioinosine + phosphate = 5-(methylsulfanyl)-alpha-D-ribose 1-phosphate + hypoxanthine. The protein operates within purine metabolism; purine nucleoside salvage. Its function is as follows. Catalyzes the reversible phosphorylation of S-methyl-5'-thioinosine (MTI) to hypoxanthine and 5-methylthioribose-1-phosphate. Involved in the breakdown of S-methyl-5'-thioadenosine (MTA), a major by-product of polyamine biosynthesis. Catabolism of (MTA) occurs via deamination to MTI and phosphorolysis to hypoxanthine. This chain is Probable S-methyl-5'-thioinosine phosphorylase, found in Xanthomonas campestris pv. campestris (strain ATCC 33913 / DSM 3586 / NCPPB 528 / LMG 568 / P 25).